Here is an 87-residue protein sequence, read N- to C-terminus: MSERNQRKVYTGRVVSDKMDKTITVLVETYKTHSLYGKRVKYSKKYKAHDEQNQAKLGDIVKIMETRPLSATKRFRLVEIVEEAVVI.

Belongs to the universal ribosomal protein uS17 family. As to quaternary structure, part of the 30S ribosomal subunit.

Its function is as follows. One of the primary rRNA binding proteins, it binds specifically to the 5'-end of 16S ribosomal RNA. In Bacillus mycoides (strain KBAB4) (Bacillus weihenstephanensis), this protein is Small ribosomal subunit protein uS17.